A 488-amino-acid polypeptide reads, in one-letter code: 3-octaprenyl-4-hydroxybenzoate carboxy-lyase (488 aa).

Asparagine 172 provides a ligand contact to Mn(2+). Residues isoleucine 175–arginine 177, arginine 189–leucine 191, and arginine 194–glycine 195 each bind prenylated FMN. Glutamate 238 provides a ligand contact to Mn(2+). Residue aspartate 287 is the Proton donor of the active site.

It belongs to the UbiD family. As to quaternary structure, homohexamer. Prenylated FMN serves as cofactor. The cofactor is Mn(2+).

It localises to the cell membrane. It carries out the reaction a 4-hydroxy-3-(all-trans-polyprenyl)benzoate + H(+) = a 2-(all-trans-polyprenyl)phenol + CO2. The protein operates within cofactor biosynthesis; ubiquinone biosynthesis. Catalyzes the decarboxylation of 3-octaprenyl-4-hydroxy benzoate to 2-octaprenylphenol, an intermediate step in ubiquinone biosynthesis. This Ectopseudomonas mendocina (strain ymp) (Pseudomonas mendocina) protein is 3-octaprenyl-4-hydroxybenzoate carboxy-lyase.